We begin with the raw amino-acid sequence, 239 residues long: Eukaryotic translation initiation factor 6 (239 aa).

This sequence belongs to the eIF-6 family. As to quaternary structure, monomer. Associates with the 60S ribosomal subunit.

The protein localises to the cytoplasm. Its subcellular location is the nucleus. The protein resides in the nucleolus. Binds to the 60S ribosomal subunit and prevents its association with the 40S ribosomal subunit to form the 80S initiation complex in the cytoplasm. May also be involved in ribosome biogenesis. The chain is Eukaryotic translation initiation factor 6 from Entamoeba dispar (strain ATCC PRA-260 / SAW760).